The sequence spans 450 residues: NADH-quinone oxidoreductase subunit H (450 aa).

Transmembrane regions (helical) follow at residues 18-38, 91-111, 128-148, 169-189, 201-221, 262-282, 292-312, 324-344, and 358-378; these read WWLVLGKALAIFVFLVLTPLL, ILAPVIAAVPAFMAFAVIPFG, LPVAVLYVLAATSIGVYGIVL, VISYEIAMALSFAAVFLDAGT, HTWYVFLLLPSFLIYVTSMVG, VTVSALATTLFLGGWHAPFPL, WWPVLWFTLKVWGFLFVFVWL, FMGLGWKILIPISLVWVMIVA, and SIALVVAGLVVALVVVVLLWK. Residues 387 to 450 are disordered; it reads APEKPVEPRG…TGPTQENSDD (64 aa). A compositionally biased stretch (basic and acidic residues) spans 390–400; sequence KPVEPRGRAEL. The span at 433-450 shows a compositional bias: polar residues; sequence VSVTGAHSTGPTQENSDD.

This sequence belongs to the complex I subunit 1 family. In terms of assembly, NDH-1 is composed of 14 different subunits. Subunits NuoA, H, J, K, L, M, N constitute the membrane sector of the complex.

The protein resides in the cell membrane. It catalyses the reaction a quinone + NADH + 5 H(+)(in) = a quinol + NAD(+) + 4 H(+)(out). NDH-1 shuttles electrons from NADH, via FMN and iron-sulfur (Fe-S) centers, to quinones in the respiratory chain. The immediate electron acceptor for the enzyme in this species is believed to be ubiquinone. Couples the redox reaction to proton translocation (for every two electrons transferred, four hydrogen ions are translocated across the cytoplasmic membrane), and thus conserves the redox energy in a proton gradient. This subunit may bind ubiquinone. The protein is NADH-quinone oxidoreductase subunit H of Rhodococcus jostii (strain RHA1).